The following is a 241-amino-acid chain: Gamma-interferon-inducible lysosomal thiol reductase-like protein (241 aa).

The signal sequence occupies residues 1–18 (MLFKSLLLLSVYAVTCYG). 2 N-linked (GlcNAc...) asparagine glycosylation sites follow: Asn-105 and Asn-152. A helical membrane pass occupies residues 218-235 (STGSAISSLGMIVTVVAV).

The protein belongs to the GILT family. In terms of tissue distribution, salivary gland (at protein level). Low-level expression in midgut (at protein level). Expressed in head and leg tissues. Ovary. Fat body. As to expression, (Microbial infection) Detected with Plasmodium berghei sporozoites isolated from the saliva of infected Anopheles gambiae mosquitoes (at protein level).

It localises to the membrane. Functionally, required for normal development of ovary and testis. Its function is as follows. (Microbial infection) Interacts with the surface of Plasmodium berghei sporozoites. Reduces P.berghei sporozoite cell traversal activity and transmission. Limits the motility of P.berghei sporozoites. Decreases the levels of host liver infection by P.berghei sporozoites. Does not affect P.berghei sporozoite viability. Indirectly promotes P.berghei survival in mosquitoes by influencing ovarian development and the subsequent production of 20-hydroxyecdysone and vitellogenin, which, in turn, modulates TEP1-dependent parasite killing. Promotes P.berghei infection in mosquitoes, most likely impacting the oocyst stage of parasite development. (Microbial infection) Promotes Plasmodium falciparum survival in mosquitoes. The protein is Gamma-interferon-inducible lysosomal thiol reductase-like protein of Anopheles gambiae (African malaria mosquito).